The sequence spans 802 residues: Xylanase/beta-glucanase (802 aa).

An N-terminal signal peptide occupies residues 1-31; it reads MKKSIFKRYAAAVGLMASVLMFTAVPTTSNA. One can recognise a GH11 domain in the interval 32–239; it reads ADDQKTGKVG…SNGSANVKSI (208 aa). The active-site Nucleophile is Glu124. Catalysis depends on Glu226, which acts as the Proton donor. The b stretch occupies residues 245–523; the sequence is IDIPDPEPIK…SYLEGHDPSK (279 aa). The 147-residue stretch at 258-404 folds into the CBM-cenC domain; sequence NGYYLKENFE…YMDGAYAGVK (147 aa). Disordered regions lie at residues 414–436 and 533–564; these read SQSV…PSVT and TTTT…YRDL. Composition is skewed to low complexity over residues 419–436 and 533–553; these read PPVT…PSVT and TTTT…TTTT. The region spanning 434–513 is the Dockerin domain; the sequence is SVTKWGDANC…LIRAISELPE (80 aa). Residues 524–555 form a linker region; the sequence is TTTTTTRITTTTTTTTTTTTSKTTTTTTTTSP. Residues 556–792 enclose the GH16 domain; it reads AMHGGYRDLG…WVTYNKNGVQ (237 aa). Glu684 acts as the Nucleophile in catalysis.

This sequence in the N-terminal section; belongs to the glycosyl hydrolase 11 (cellulase G) family. The protein in the C-terminal section; belongs to the glycosyl hydrolase 16 family.

The catalysed reaction is Endohydrolysis of (1-&gt;4)-beta-D-xylosidic linkages in xylans.. It catalyses the reaction Hydrolysis of (1-&gt;4)-beta-D-glucosidic linkages in beta-D-glucans containing (1-&gt;3)- and (1-&gt;4)-bonds.. The protein operates within glycan degradation; xylan degradation. Functionally, contains two catalytic domains with xylanase and endo-beta-1,3-1,4 glucanase activities. The chain is Xylanase/beta-glucanase (xynD) from Ruminococcus flavefaciens.